Consider the following 180-residue polypeptide: Crossover junction endodeoxyribonuclease RuvC (180 aa).

Catalysis depends on residues Asp-7, Glu-66, and Asp-138. Residues Asp-7, Glu-66, and Asp-138 each coordinate Mg(2+).

Belongs to the RuvC family. Homodimer which binds Holliday junction (HJ) DNA. The HJ becomes 2-fold symmetrical on binding to RuvC with unstacked arms; it has a different conformation from HJ DNA in complex with RuvA. In the full resolvosome a probable DNA-RuvA(4)-RuvB(12)-RuvC(2) complex forms which resolves the HJ. Mg(2+) serves as cofactor.

The protein resides in the cytoplasm. It carries out the reaction Endonucleolytic cleavage at a junction such as a reciprocal single-stranded crossover between two homologous DNA duplexes (Holliday junction).. In terms of biological role, the RuvA-RuvB-RuvC complex processes Holliday junction (HJ) DNA during genetic recombination and DNA repair. Endonuclease that resolves HJ intermediates. Cleaves cruciform DNA by making single-stranded nicks across the HJ at symmetrical positions within the homologous arms, yielding a 5'-phosphate and a 3'-hydroxyl group; requires a central core of homology in the junction. The consensus cleavage sequence is 5'-(A/T)TT(C/G)-3'. Cleavage occurs on the 3'-side of the TT dinucleotide at the point of strand exchange. HJ branch migration catalyzed by RuvA-RuvB allows RuvC to scan DNA until it finds its consensus sequence, where it cleaves and resolves the cruciform DNA. This chain is Crossover junction endodeoxyribonuclease RuvC, found in Paraburkholderia xenovorans (strain LB400).